A 398-amino-acid chain; its full sequence is Growth-regulating factor 3 (398 aa).

Positions 1–17 are enriched in low complexity; the sequence is MDLQLKQWRSQQQQQHQ. The tract at residues 1–32 is disordered; the sequence is MDLQLKQWRSQQQQQHQTESEEQPSAAKIPKH. The QLQ domain maps to 76-111; it reads FFSWAQWQELELQALIYRYMLAGAAVPQELLLPIKK. The 45-residue stretch at 144-188 folds into the WRC domain; that stretch reads DPEPGRCRRTDGKKWRCSRDVFAGHKYCERHMHRGRNRSRKPVET. 2 short sequence motifs (bipartite nuclear localization signal) span residues 149–159 and 177–184; these read RCRRTDGKKWR and RGRNRSRK. 2 stretches are compositionally biased toward polar residues: residues 299–350 and 383–398; these read SLQE…RDQQ and PTSVLHQLGVSTQAFH. Residues 299 to 398 form a disordered region; it reads SLQEADNSSS…QLGVSTQAFH (100 aa).

It belongs to the GRF family. Strongly expressed in actively growing and developing tissues, such as roots, upper stems, and shoot tips containing the shoot apical meristem (SAM) and flower buds. Also expressed in mature flowers, but weakly expressed in mature stems and leaves.

It is found in the nucleus. Functionally, transcription activator that plays a role in the regulation of cell expansion in leaf and cotyledons tissues. Component of a network formed by miR396, the GRFs and their interacting factors (GIFs) acting in the regulation of meristem function, at least partially through the control of cell proliferation. microRNA396-GRF1/GRF3 regulatory module acts as a developmental regulator in the reprogramming of root cells during cyst nematode infection, leading to the formation of the syncytium. This Arabidopsis thaliana (Mouse-ear cress) protein is Growth-regulating factor 3 (GRF3).